The primary structure comprises 130 residues: Small ribosomal subunit protein uS11 (130 aa).

It belongs to the universal ribosomal protein uS11 family. Part of the 30S ribosomal subunit. Interacts with proteins S7 and S18. Binds to IF-3.

Located on the platform of the 30S subunit, it bridges several disparate RNA helices of the 16S rRNA. Forms part of the Shine-Dalgarno cleft in the 70S ribosome. In Caldanaerobacter subterraneus subsp. tengcongensis (strain DSM 15242 / JCM 11007 / NBRC 100824 / MB4) (Thermoanaerobacter tengcongensis), this protein is Small ribosomal subunit protein uS11.